Reading from the N-terminus, the 619-residue chain is Alpha-(1,6)-fucosyltransferase (619 aa).

At 1–17 (MLLVRQLFGASANSWAR) the chain is on the cytoplasmic side. The helical; Signal-anchor for type II membrane protein transmembrane segment at 18-38 (ALIIFVLAWIGLVYVFVVKLT) threads the bilayer. The Lumenal portion of the chain corresponds to 39 to 619 (NTQGQQAAGE…TAKLPLYAGI (581 aa)). Cystine bridges form between cysteine 253/cysteine 315, cysteine 261/cysteine 279, and cysteine 267/cysteine 271. Residues 255–539 (NARKLVCKLN…PDAAHRFKSL (285 aa)) enclose the GT23 domain. Positions 345–351 (PRPPYLP) match the SH3-binding motif. The interval 411-412 (RR) is important for donor substrate binding. A disulfide bridge links cysteine 511 with cysteine 518. The 62-residue stretch at 548 to 609 (QNAHNRRVVI…PSFKVEEKVD (62 aa)) folds into the SH3 domain.

Belongs to the glycosyltransferase 23 family. Mn(2+) serves as cofactor. Mg(2+) is required as a cofactor.

The protein localises to the golgi apparatus. Its subcellular location is the golgi stack membrane. It catalyses the reaction N(4)-{beta-D-GlcNAc-(1-&gt;2)-alpha-D-Man-(1-&gt;3)-[beta-D-GlcNAc-(1-&gt;2)-alpha-D-Man-(1-&gt;6)]-beta-D-Man-(1-&gt;4)-beta-D-GlcNAc-(1-&gt;4)-beta-D-GlcNAc}-L-asparaginyl-[protein] + GDP-beta-L-fucose = an N(4)-{beta-D-GlcNAc-(1-&gt;2)-alpha-D-Man-(1-&gt;3)-[beta-D-GlcNAc-(1-&gt;2)-alpha-D-Man-(1-&gt;6)]-beta-D-Man-(1-&gt;4)-beta-D-GlcNAc-(1-&gt;4)-[alpha-L-Fuc-(1-&gt;6)]-beta-D-GlcNAc}-L-asparaginyl-[protein] + GDP + H(+). The protein operates within protein modification; protein glycosylation. In terms of biological role, catalyzes the addition of fucose in alpha 1-6 linkage to the first GlcNAc residue, next to the peptide chains in N-glycans. The addition is prevented if the GlcNAc residue is already fucosylated. This chain is Alpha-(1,6)-fucosyltransferase (FucT6), found in Drosophila melanogaster (Fruit fly).